The following is a 101-amino-acid chain: MYKMKRNTLFVRQSCVSSSRIGTQLPLNKSKIYTSSSINITNYKQDQKLYTRHYYTNGKIFENKKVDQYLKVTEEMVFSFMNGFTDGCICGTIIILCLINT.

Residues 77 to 99 (VFSFMNGFTDGCICGTIIILCLI) form a helical membrane-spanning segment.

The protein resides in the membrane. This is an uncharacterized protein from Acanthamoeba polyphaga mimivirus (APMV).